The primary structure comprises 450 residues: Glucose-6-phosphate isomerase (450 aa).

Glutamate 289 functions as the Proton donor in the catalytic mechanism. Catalysis depends on residues histidine 310 and lysine 424.

The protein belongs to the GPI family.

It localises to the cytoplasm. It carries out the reaction alpha-D-glucose 6-phosphate = beta-D-fructose 6-phosphate. It participates in carbohydrate biosynthesis; gluconeogenesis. Its pathway is carbohydrate degradation; glycolysis; D-glyceraldehyde 3-phosphate and glycerone phosphate from D-glucose: step 2/4. Its function is as follows. Catalyzes the reversible isomerization of glucose-6-phosphate to fructose-6-phosphate. The protein is Glucose-6-phosphate isomerase of Leptospira biflexa serovar Patoc (strain Patoc 1 / Ames).